The following is a 590-amino-acid chain: MKLKVYADRMSQPSRAVLIFCKVNEIQFDEILIYLANRQQLSPEFKDINPMGKVPAIVDGKLKLSESHAILIYLSSAYPSVVDHWYPTDLSKRARIHSVLDWHHTNLRPGAAGYVLNSVLGPALGLPLNPKAAAEAEQLLTKSLTTLDTFWLKGNAMFLLGSNQPSIADLSLVCELTQLQVLDDKDRLRLLSPHKNVEQWIENTRKATMPHFDEVHEVLFRAKDRCQKQREMATASKPGPQSKIIQFSTIGEKSDDPNLVQNTTDRRKHRRKWSRAEDAILISAWLNTSKDPIVDNEHKACAFWKRIGAYFNNSASLANLPKREPSHCKQRWSKLNDKVCKFVGCYDQALNQRSSGQSEDDVFQVAYQVYTNNYKSNFTLEHAWRELRHSKKWCSLYPFENSKGGGSSKRTKLNNGDRVYSSSSNPESVPIALDEEEQVMDLPLGVKSSKQKEKKVATIITIEEREADSGSRLENLWVLDEEEQVMDRPLGVKSLEQKENKVAPKPTIEEREAADSRSRLENLWALKEKEEREADSRSRLENLWALKEKDIEEQKKLTRMEVLKSLLGRTTDQLSEKEDILKNKLIDEML.

The GST N-terminal domain occupies 1-82 (MKLKVYADRM…YLSSAYPSVV (82 aa)). Glutathione-binding positions include 11-12 (SQ), 40-41 (QL), 53-54 (KV), and 66-67 (ES). In terms of domain architecture, GST C-terminal spans 89–232 (DLSKRARIHS…KDRCQKQREM (144 aa)). The 72-residue stretch at 265 to 336 (DRRKHRRKWS…HCKQRWSKLN (72 aa)) folds into the Myb-like domain. Residues 402 to 427 (SKGGGSSKRTKLNNGDRVYSSSSNPE) are disordered.

It belongs to the GST superfamily. Theta family.

The protein localises to the nucleus. It carries out the reaction RX + glutathione = an S-substituted glutathione + a halide anion + H(+). May be involved in the conjugation of reduced glutathione to a wide number of exogenous and endogenous hydrophobic electrophiles and have a detoxification role against certain herbicides. The chain is Glutathione S-transferase T3 (GSTT3) from Arabidopsis thaliana (Mouse-ear cress).